Reading from the N-terminus, the 216-residue chain is Sporamin B (216 aa).

Positions 1–21 are cleaved as a signal peptide; sequence MKALALLFVLSLYLLPNPAHS.

This sequence belongs to the protease inhibitor I3 (leguminous Kunitz-type inhibitor) family. Accumulates specifically in tuberous roots and tubers upon tuberization. Sporamin accounts 60 to 80% of the total soluble protein of the organ.

The protein localises to the vacuole. Its function is as follows. Major tuberous root protein. The polypeptide is Sporamin B (GSPO-B1) (Ipomoea batatas (Sweet potato)).